Here is a 75-residue protein sequence, read N- to C-terminus: uncharacterized protein (75 aa).

This is an uncharacterized protein from Treponema pallidum (strain Nichols).